Consider the following 386-residue polypeptide: L-lactate oxidase (386 aa).

Positions 16–382 (AQAPFPICFA…RTITLVKNDG (367 aa)) constitute an FMN hydroxy acid dehydrogenase domain. Residue Y42 coordinates pyruvate. FMN is bound by residues 95–97 (PVG), S124, and Q146. Y148 is a binding site for pyruvate. FMN is bound at residue T174. Residue R183 participates in pyruvate binding. FMN contacts are provided by K253 and S275. H277 and R280 together coordinate pyruvate. The active-site Proton acceptor is H277. Residues 308–312 (DSGVY) and R332 contribute to the FMN site.

Belongs to the FMN-dependent alpha-hydroxy acid dehydrogenase family. As to quaternary structure, homotetramer. It depends on FMN as a cofactor.

It catalyses the reaction a (2S)-2-hydroxycarboxylate + O2 = a 2-oxocarboxylate + H2O2. It carries out the reaction (S)-lactate + O2 = pyruvate + H2O2. The catalysed reaction is 2-hydroxyoctanoate + O2 = 2-oxooctanoate + H2O2. The enzyme catalyses mandelate + O2 = phenylglyoxylate + H2O2. It catalyses the reaction 2-hydroxyoctadecanoate + O2 = 2-oxooctadecanoate + H2O2. It carries out the reaction (S)-2-hydroxyglutarate + O2 = H2O2 + 2-oxoglutarate. Oxidase that catalyzes the oxidation of a broad range of 2-hydroxyacids in vitro, such as (S)-lactate, 2-hydroxyoctanoate, mandelate, 2-hydroxyoctadecanoate and (S)-2-hydroxyglutarate, to the corresponding 2-oxoacids, with a reduction of O2 to H2O2. May be involved in the utilization of L-lactate as an energy source for growth. The protein is L-lactate oxidase of Lysinibacillus sphaericus (strain C3-41).